Consider the following 383-residue polypeptide: Bifunctional enzyme IspD/IspF (383 aa).

A 2-C-methyl-D-erythritol 4-phosphate cytidylyltransferase region spans residues 1 to 226; it reads MKIAAVIVAA…ERQIMSETIT (226 aa). Residues 227–383 are 2-C-methyl-D-erythritol 2,4-cyclodiphosphate synthase; that stretch reads VTGQGYDVHR…QAIVTARLTT (157 aa). A divalent metal cation-binding residues include Asp-233 and His-235. 4-CDP-2-C-methyl-D-erythritol 2-phosphate contacts are provided by residues 233–235 and 259–260; these read DVH and HS. His-267 provides a ligand contact to a divalent metal cation. Residues 281 to 283, 357 to 360, Phe-364, and Arg-367 contribute to the 4-CDP-2-C-methyl-D-erythritol 2-phosphate site; these read DIG and TTTE.

This sequence in the N-terminal section; belongs to the IspD/TarI cytidylyltransferase family. IspD subfamily. It in the C-terminal section; belongs to the IspF family. A divalent metal cation is required as a cofactor.

The enzyme catalyses 2-C-methyl-D-erythritol 4-phosphate + CTP + H(+) = 4-CDP-2-C-methyl-D-erythritol + diphosphate. The catalysed reaction is 4-CDP-2-C-methyl-D-erythritol 2-phosphate = 2-C-methyl-D-erythritol 2,4-cyclic diphosphate + CMP. It functions in the pathway isoprenoid biosynthesis; isopentenyl diphosphate biosynthesis via DXP pathway; isopentenyl diphosphate from 1-deoxy-D-xylulose 5-phosphate: step 2/6. It participates in isoprenoid biosynthesis; isopentenyl diphosphate biosynthesis via DXP pathway; isopentenyl diphosphate from 1-deoxy-D-xylulose 5-phosphate: step 4/6. Bifunctional enzyme that catalyzes the formation of 4-diphosphocytidyl-2-C-methyl-D-erythritol from CTP and 2-C-methyl-D-erythritol 4-phosphate (MEP) (IspD), and catalyzes the conversion of 4-diphosphocytidyl-2-C-methyl-D-erythritol 2-phosphate (CDP-ME2P) to 2-C-methyl-D-erythritol 2,4-cyclodiphosphate (ME-CPP) with a corresponding release of cytidine 5-monophosphate (CMP) (IspF). The chain is Bifunctional enzyme IspD/IspF from Maricaulis maris (strain MCS10) (Caulobacter maris).